Consider the following 487-residue polypeptide: MIASHLLSPLIFLEQQPAYSSVVIGALVVCLVCLVWPTESAKRAPPAPNFGVPRIGDAAAFLADPVSFVQKATQKCGSIFQIKLLVANLVYLRGVKLNRMYTDVKEDTWSFGGGIGLFLRKIAKPGYFDHLRTLVNSLNRGVNRKAALEHYFQLIEEEAGKALQGWSQRGAVPVFEETSRFVHRVIVRCLMGQDFYDHRLDELYEILHHMEADIGHPFNLLLPDWIPHPAARRLEQNRDRFAQIFEQQVADRRRNPEIWRDSLDYISFTLEDPRTAHLEGYLPSHHTVLMFAAHTSTVASISWTILELLRNPDYLAQLRQSLAAHPDARKCPELLAGIKETGRHYSGVHMFRTTHRAVELEGGKYLVPPNWIVSISPYLTHHDPEIFHTPQHWIPERWLQPDDRMQNLNNPREAAFLQFGAGCHRCPGEALAGIIAQGLLATLVRRYDMVWGKEGPPTDLTALDFSKVGSPWLEGDASIAIRPKVAE.

The chain crosses the membrane as a helical span at residues 17 to 37; that stretch reads PAYSSVVIGALVVCLVCLVWP. Cys426 is a heme binding site.

This sequence belongs to the cytochrome P450 family. Requires heme as cofactor.

Its subcellular location is the membrane. It participates in secondary metabolite biosynthesis. In terms of biological role, cytochrome P450 monooxygenase; part of the gene cluster that mediates the biosynthesis of pyranoviolin A, a pyranonigrin analog with a C-3 methoxy group. Initially, the PKS portion of pyvA synthesizes C-10 carbon chain from 5 molecules of malonyl-CoA, which is then condensed with the thiolation (T) domain-bound glycine activated by the adenylation (A) domain. The subsequent chain release by Dieckmann condensation (DKC) could be catalyzed by the TE domain present at the C-terminus of pyvA and/or the alpha/beta hydrolase pyvD, installing the tetramic acid moiety. The FAD-dependent monooxygenase pyvC next epoxidizes one of the olefins of the polyketide part, and the epoxide ring-opening induces the dihydro-gamma-pyrone ring formation. The cytochrome P450 monooxygeanse pyvB would be responsible for the 2 consecutive reactions, in which the dihydro-gamma-pyrone is oxidized to gamma-pyrone and C-7 is hydroxylated to yield pyranonigrin F. Finally, the O-methyltransferase pyvH methylates the C-3 hydroxy group to complete the biosynthesis. In Aspergillus violaceofuscus (strain CBS 115571), this protein is Cytochrome P450 monooxygenase pyvB.